Reading from the N-terminus, the 367-residue chain is Putrescine/agmatine-binding protein (367 aa).

Residues 1 to 19 (MKKVCALALSILTTIGATA) form the signal peptide.

It belongs to the bacterial solute-binding protein 1 family.

It is found in the periplasm. Its function is as follows. Binds putrescine and agmatine. The sequence is that of Putrescine/agmatine-binding protein from Pseudomonas aeruginosa (strain ATCC 15692 / DSM 22644 / CIP 104116 / JCM 14847 / LMG 12228 / 1C / PRS 101 / PAO1).